The chain runs to 258 residues: Axonemal dynein light intermediate polypeptide 1 (258 aa).

2 disordered regions span residues 19–60 (RNTE…CVPD) and 207–231 (VNEQ…EEKK). A compositionally biased stretch (low complexity) spans 34–48 (SPQQPGPSGSAPQLP). The stretch at 176-255 (MRKALQAEQG…LKAQLEGIIA (80 aa)) forms a coiled coil.

It belongs to the inner dynein arm light chain family. Interacts with CFAP45. Interacts with DYNC1H1.

The protein resides in the cell projection. It localises to the cilium. The protein localises to the flagellum. It is found in the dynein axonemal particle. Its subcellular location is the cytoplasm. Functionally, involved in sperm flagellum assembly. This is Axonemal dynein light intermediate polypeptide 1 (DNALI1) from Macaca fascicularis (Crab-eating macaque).